Consider the following 179-residue polypeptide: Cell division protein SepF (179 aa).

Positions 19–55 (DSSLPYEKRDEPVFTSVNSSQEPALPMNQPSQSAGAK) are disordered. The span at 33-55 (TSVNSSQEPALPMNQPSQSAGAK) shows a compositional bias: polar residues.

This sequence belongs to the SepF family. As to quaternary structure, homodimer. Interacts with FtsZ.

It localises to the cytoplasm. Its function is as follows. Cell division protein that is part of the divisome complex and is recruited early to the Z-ring. Probably stimulates Z-ring formation, perhaps through the cross-linking of FtsZ protofilaments. Its function overlaps with FtsA. The polypeptide is Cell division protein SepF (Streptococcus pneumoniae (strain JJA)).